Consider the following 406-residue polypeptide: Probable tRNA sulfurtransferase (406 aa).

The THUMP domain maps to 60 to 166 (DQVMNRLKLV…LNGIFLSSET (107 aa)). ATP contacts are provided by residues 184 to 185 (MM), 209 to 210 (HF), Arg-266, Gly-288, and Gln-297.

The protein belongs to the ThiI family.

It localises to the cytoplasm. It catalyses the reaction [ThiI sulfur-carrier protein]-S-sulfanyl-L-cysteine + a uridine in tRNA + 2 reduced [2Fe-2S]-[ferredoxin] + ATP + H(+) = [ThiI sulfur-carrier protein]-L-cysteine + a 4-thiouridine in tRNA + 2 oxidized [2Fe-2S]-[ferredoxin] + AMP + diphosphate. The enzyme catalyses [ThiS sulfur-carrier protein]-C-terminal Gly-Gly-AMP + S-sulfanyl-L-cysteinyl-[cysteine desulfurase] + AH2 = [ThiS sulfur-carrier protein]-C-terminal-Gly-aminoethanethioate + L-cysteinyl-[cysteine desulfurase] + A + AMP + 2 H(+). The protein operates within cofactor biosynthesis; thiamine diphosphate biosynthesis. Functionally, catalyzes the ATP-dependent transfer of a sulfur to tRNA to produce 4-thiouridine in position 8 of tRNAs, which functions as a near-UV photosensor. Also catalyzes the transfer of sulfur to the sulfur carrier protein ThiS, forming ThiS-thiocarboxylate. This is a step in the synthesis of thiazole, in the thiamine biosynthesis pathway. The sulfur is donated as persulfide by IscS. This chain is Probable tRNA sulfurtransferase, found in Limosilactobacillus reuteri subsp. reuteri (strain JCM 1112) (Lactobacillus reuteri).